A 417-amino-acid polypeptide reads, in one-letter code: Squalene synthase (417 aa).

NADP(+) is bound by residues arginine 52 and arginine 77. Mg(2+) contacts are provided by aspartate 80, glutamate 83, and aspartate 84. NADP(+) is bound at residue arginine 218. Residues 284–304 traverse the membrane as a helical segment; sequence SIFNFCAIPQVMAIATLAACY. NADP(+) is bound by residues lysine 315 and arginine 317. Residues 384 to 404 form a helical membrane-spanning segment; sequence PIYLSFVMLLAALSWQYLSTL.

The protein belongs to the phytoene/squalene synthase family. Requires Mg(2+) as cofactor.

Its subcellular location is the endoplasmic reticulum membrane. The enzyme catalyses 2 (2E,6E)-farnesyl diphosphate + NADPH + H(+) = squalene + 2 diphosphate + NADP(+). The catalysed reaction is 2 (2E,6E)-farnesyl diphosphate + NADH + H(+) = squalene + 2 diphosphate + NAD(+). It carries out the reaction presqualene diphosphate + NADH + H(+) = squalene + diphosphate + NAD(+). It catalyses the reaction presqualene diphosphate + NADPH + H(+) = squalene + diphosphate + NADP(+). The enzyme catalyses 2 (2E,6E)-farnesyl diphosphate = presqualene diphosphate + diphosphate. It participates in terpene metabolism; lanosterol biosynthesis; lanosterol from farnesyl diphosphate: step 1/3. Functionally, catalyzes the condensation of 2 farnesyl pyrophosphate (FPP) moieties to form squalene. Proceeds in two distinct steps. In the first half-reaction, two molecules of FPP react to form the stable presqualene diphosphate intermediate (PSQPP), with concomitant release of a proton and a molecule of inorganic diphosphate. In the second half-reaction, PSQPP undergoes heterolysis, isomerization, and reduction with NADPH or NADH to form squalene. It is the first committed enzyme of the sterol biosynthesis pathway. This chain is Squalene synthase (FDFT1), found in Bos taurus (Bovine).